The primary structure comprises 319 residues: mRNA decay activator protein ZFP36 (319 aa).

A necessary for nuclear export region spans residues 1–15; it reads MDLSAIYESLQSMSH. Residues 1-92 are necessary and sufficient for the association with mRNA decay enzymes and mRNA decay activation; it reads MDLSAIYESL…PTSPTATPTT (92 aa). 2 necessary for localization of ARE-containing mRNAs to processing bodies (PBs) regions span residues 1–166 and 92–319; these read MDLS…DLAL and TSSR…SVSE. The residue at position 52 (Ser52) is a Phosphoserine; by MAPKAPK2. Ser58 bears the Phosphoserine mark. The stretch at 63-67 is one P-P-P-P-G repeat; sequence PPPPG. Residues 65–84 are compositionally biased toward pro residues; it reads PPGFAPLAPRPGPELSPSPT. The segment at 65 to 95 is disordered; it reads PPGFAPLAPRPGPELSPSPTSPTATPTTSSR. Phosphoserine is present on residues Ser80 and Ser82. Thr84 bears the Phosphothreonine mark. Ser85 bears the Phosphoserine mark. Low complexity predominate over residues 85–94; that stretch reads SPTATPTTSS. Residues 87–160 form a necessary for nuclear localization region; sequence TATPTTSSRY…GSRCHFIHNP (74 aa). The interval 89–165 is necessary for RNA-binding; that stretch reads TPTTSSRYKT…FIHNPTEDLA (77 aa). C3H1-type zinc fingers lie at residues 95-123 and 133-161; these read RYKT…HGLG and KYKT…HNPT. A necessary for interaction with PABPN1 region spans residues 95-186; sequence RYKTELCRTY…ISFSGLPSGR (92 aa). Positions 166 to 319 are necessary for mRNA decay activation; it reads LPGQPHVLRQ…PIFNRISVSE (154 aa). Ser178 bears the Phosphoserine; by MAPKAPK2 mark. Over residues 179–188 the composition is skewed to low complexity; it reads FSGLPSGRRS. Positions 179–309 are disordered; it reads FSGLPSGRRS…PQTPAPPRRL (131 aa). Phosphoserine is present on Ser189. Residues 190–194 form a P-P-P-P-G repeat; it reads PPPPG. The span at 196-208 shows a compositional bias: low complexity; sequence SGPSLSSCSFSPS. Ser210 carries the phosphoserine modification. A P-P-P-P-G repeat occupies 211-215; the sequence is PPPPG. A Phosphoserine; by MAPK1; in vitro modification is found at Ser220. Thr250 is subject to Phosphothreonine. Phosphoserine occurs at positions 269, 289, and 316. Over residues 279 to 289 the composition is skewed to low complexity; the sequence is SSGSSLGGSDS. Residues 305–319 are interaction with CNOT1; sequence PPRRLPIFNRISVSE.

Associates with cytoplasmic CCR4-NOT and PAN2-PAN3 deadenylase complexes to trigger ARE-containing mRNA deadenylation and decay processes. Part of a mRNA decay activation complex at least composed of poly(A)-specific exoribonucleases CNOT6, EXOSC2 and XRN1 and mRNA-decapping enzymes DCP1A and DCP2. Associates with the RNA exosome complex. Interacts (via phosphorylated form) with 14-3-3 proteins; these interactions promote exclusion of ZFP36 from cytoplasmic stress granules in response to arsenite treatment in a MAPKAPK2-dependent manner and does not prevent CCR4-NOT deadenylase complex recruitment or ZFP36-induced ARE-containing mRNA deadenylation and decay processes. Interacts with 14-3-3 proteins; these interactions occur in response to rapamycin in an Akt-dependent manner. Interacts with AGO2 and AGO4. Interacts (via C-terminus) with CNOT1; this interaction occurs in a RNA-independent manner and induces mRNA deadenylation. Interacts (via N-terminus) with CNOT6. Interacts with CNOT6L. Interacts (via C-terminus) with CNOT7; this interaction occurs in a RNA-independent manner, induces mRNA deadenylation and is inhibited in a phosphorylation MAPKAPK2-dependent manner. Interacts (via unphosphorylated form) with CNOT8; this interaction occurs in a RNA-independent manner and is inhibited in a phosphorylation MAPKAPK2-dependent manner. Interacts with DCP1A. Interacts (via N-terminus) with DCP2. Interacts with EDC3. Interacts (via N-terminus) with EXOSC2. Interacts with heat shock 70 kDa proteins. Interacts with KHSRP; this interaction increases upon cytokine-induced treatment. Interacts with MAP3K4; this interaction enhances the association with SH3KBP1/CIN85. Interacts with MAPKAPK2; this interaction occurs upon skeletal muscle satellite cell activation. Interacts with NCL. Interacts with NUP214; this interaction increases upon lipopolysaccharide (LPS) stimulation. Interacts with PABPC1; this interaction occurs in a RNA-dependent manner. Interacts (via hypophosphorylated form) with PABPN1 (via RRM domain and C-terminal arginine-rich region); this interaction occurs in the nucleus in a RNA-independent manner, decreases in presence of single-stranded poly(A) RNA-oligomer and in a p38 MAPK-dependent-manner and inhibits nuclear poly(A) tail synthesis. Interacts with PAN2. Interacts (via C3H1-type zinc finger domains) with PKM. Interacts (via C3H1-type zinc finger domains) with nuclear RNA poly(A) polymerase. Interacts with PPP2CA; this interaction occurs in LPS-stimulated cells and induces ZFP36 dephosphorylation, and hence may promote ARE-containing mRNAs decay. Interacts (via C-terminus) with PRR5L (via C-terminus); this interaction may accelerate ZFP36-mediated mRNA decay during stress. Interacts (via C-terminus) with SFN; this interaction occurs in a phosphorylation-dependent manner. Interacts (via extreme C-terminal region) with SH3KBP1/CIN85 (via SH3 domains); this interaction enhances MAP3K4-induced phosphorylation of ZFP36 at Ser-58 and Ser-85 and does not alter neither ZFP36 binding to ARE-containing transcripts nor TNF-alpha mRNA decay. Interacts with XRN1. Interacts (via C-terminus and Ser-178 phosphorylated form) with YWHAB; this interaction occurs in a p38/MAPKAPK2-dependent manner, increases cytoplasmic localization of ZFP36 and protects ZFP36 from Ser-178 dephosphorylation by serine/threonine phosphatase 2A, and hence may be crucial for stabilizing ARE-containing mRNAs. Interacts (via phosphorylated form) with YWHAE. Interacts (via C-terminus) with YWHAG; this interaction occurs in a phosphorylation-dependent manner. Interacts with YWHAH; this interaction occurs in a phosphorylation-dependent manner. Interacts with YWHAQ; this interaction occurs in a phosphorylation-dependent manner. Interacts with (via C-terminus) YWHAZ; this interaction occurs in a phosphorylation-dependent manner. Does not interact with SH3KBP1. Interacts (via the 4EHP-binding motif) with EIF4E2; the interaction is direct. Interacts (via P-P-P-P-G repeats) with GIGYF2; the interaction is direct. Post-translationally, phosphorylated. Phosphorylation at serine and/or threonine residues occurs in a p38 MAPK- and MAPKAPK2-dependent manner. Phosphorylated by MAPKAPK2 at Ser-52 and Ser-178; phosphorylation increases its stability and cytoplasmic localization, promotes binding to 14-3-3 adapter proteins and inhibits the recruitment of cytoplasmic CCR4-NOT and PAN2-PAN3 deadenylase complexes to the mRNA decay machinery, thereby inhibiting ZFP36-induced ARE-containing mRNA deadenylation and decay processes. Phosphorylation by MAPKAPK2 does not impair ARE-containing RNA-binding. Phosphorylated in a MAPKAPK2- and p38 MAPK-dependent manner upon skeletal muscle satellite cell activation; this phosphorylation inhibits ZFP36-mediated mRNA decay activity, and hence stabilizes MYOD1 mRNA. Phosphorylated by MAPK1 upon mitogen stimulation. Phosphorylated at Ser-58 and Ser-85; these phosphorylations increase in a SH3KBP1-dependent manner. Phosphorylated at serine and threonine residues in a pyruvate kinase PKM- and p38 MAPK-dependent manner. Phosphorylation at Ser-52 may participate in the PKM-mediated degradation of ZFP36 in a p38 MAPK-dependent manner. Dephosphorylated by serine/threonine phosphatase 2A at Ser-178. In terms of processing, ubiquitinated; pyruvate kinase (PKM)-dependent ubiquitination leads to proteasomal degradation through a p38 MAPK signaling pathway. Expressed in skeletal muscle satellite cells. Strongly expressed in differentiated adipocytes compared to preadipocytes (at protein level). Expressed in embryonic stem cells (ESCs). Expressed in heart, placenta, kidney, intestine, liver, lung, thymus, fat and spleen.

It is found in the nucleus. The protein resides in the cytoplasm. Its subcellular location is the cytoplasmic granule. It localises to the P-body. Functionally, zinc-finger RNA-binding protein that destabilizes numerous cytoplasmic AU-rich element (ARE)-containing mRNA transcripts by promoting their poly(A) tail removal or deadenylation, and hence provide a mechanism for attenuating protein synthesis. Acts as an 3'-untranslated region (UTR) ARE mRNA-binding adapter protein to communicate signaling events to the mRNA decay machinery. Recruits deadenylase CNOT7 (and probably the CCR4-NOT complex) via association with CNOT1, and hence promotes ARE-mediated mRNA deadenylation. Also functions by recruiting components of the cytoplasmic RNA decay machinery to the bound ARE-containing mRNAs. Self-regulates by destabilizing its own mRNA. Binds to 3'-UTR ARE of numerous mRNAs and of its own mRNA. Plays a role in anti-inflammatory responses; suppresses tumor necrosis factor (TNF)-alpha production by stimulating ARE-mediated TNF-alpha mRNA decay and several other inflammatory ARE-containing mRNAs in interferon (IFN)- and/or lipopolysaccharide (LPS)-induced macrophages. Also plays a role in the regulation of dendritic cell maturation at the post-transcriptional level, and hence operates as part of a negative feedback loop to limit the inflammatory response. Promotes ARE-mediated mRNA decay of hypoxia-inducible factor HIF1A mRNA during the response of endothelial cells to hypoxia. Positively regulates early adipogenesis of preadipocytes by promoting ARE-mediated mRNA decay of immediate early genes (IEGs). Negatively regulates hematopoietic/erythroid cell differentiation by promoting ARE-mediated mRNA decay of the transcription factor STAT5B mRNA. Plays a role in maintaining skeletal muscle satellite cell quiescence by promoting ARE-mediated mRNA decay of the myogenic determination factor MYOD1 mRNA. Also associates with and regulates the expression of non-ARE-containing target mRNAs at the post-transcriptional level, such as MHC class I mRNAs. Participates in association with argonaute RISC catalytic components in the ARE-mediated mRNA decay mechanism; assists microRNA (miRNA) targeting ARE-containing mRNAs. May also play a role in the regulation of cytoplasmic mRNA decapping; enhances decapping of ARE-containing RNAs, in vitro. Involved in the delivery of target ARE-mRNAs to processing bodies (PBs). In addition to its cytosolic mRNA-decay function, affects nuclear pre-mRNA processing. Negatively regulates nuclear poly(A)-binding protein PABPN1-stimulated polyadenylation activity on ARE-containing pre-mRNA during LPS-stimulated macrophages. Also involved in the regulation of stress granule (SG) and P-body (PB) formation and fusion. Plays a role in the regulation of keratinocyte proliferation, differentiation and apoptosis. Plays a role as a tumor suppressor by inhibiting cell proliferation in breast cancer cells. The protein is mRNA decay activator protein ZFP36 of Mus musculus (Mouse).